The following is a 56-amino-acid chain: Ferredoxin (56 aa).

4Fe-4S ferredoxin-type domains follow at residues 2-28 (AYKI…SQGD) and 29-56 (SIFV…PVQE). Residues Cys-9, Cys-12, Cys-15, Cys-19, Cys-38, Cys-41, Cys-44, and Cys-48 each coordinate [4Fe-4S] cluster.

Requires [4Fe-4S] cluster as cofactor.

Its function is as follows. Ferredoxins are iron-sulfur proteins that transfer electrons in a wide variety of metabolic reactions. This chain is Ferredoxin, found in Clostridium pasteurianum.